Consider the following 141-residue polypeptide: Large ribosomal subunit protein uL11c (141 aa).

The protein belongs to the universal ribosomal protein uL11 family. As to quaternary structure, part of the ribosomal stalk of the 50S ribosomal subunit. Interacts with L10 and the large rRNA to form the base of the stalk. L10 forms an elongated spine to which L12 dimers bind in a sequential fashion forming a multimeric L10(L12)X complex.

It localises to the plastid. Its subcellular location is the chloroplast. Its function is as follows. Forms part of the ribosomal stalk which helps the ribosome interact with GTP-bound translation factors. This Trieres chinensis (Marine centric diatom) protein is Large ribosomal subunit protein uL11c.